The chain runs to 683 residues: Translation initiation factor IF-2 (683 aa).

Residues 182–351 enclose the tr-type G domain; that stretch reads KRPPVVTVMG…ILTAEMEELK (170 aa). A G1 region spans residues 191–198; sequence GHVDHGKT. Position 191 to 198 (191 to 198) interacts with GTP; that stretch reads GHVDHGKT. The tract at residues 216-220 is G2; it reads GITQH. The tract at residues 237-240 is G3; that stretch reads DTPG. GTP-binding positions include 237–241 and 291–294; these read DTPGH and NKID. The segment at 291–294 is G4; that stretch reads NKID. The G5 stretch occupies residues 327-329; it reads SAH.

Belongs to the TRAFAC class translation factor GTPase superfamily. Classic translation factor GTPase family. IF-2 subfamily.

It is found in the cytoplasm. In terms of biological role, one of the essential components for the initiation of protein synthesis. Protects formylmethionyl-tRNA from spontaneous hydrolysis and promotes its binding to the 30S ribosomal subunits. Also involved in the hydrolysis of GTP during the formation of the 70S ribosomal complex. This is Translation initiation factor IF-2 from Clostridium novyi (strain NT).